A 62-amino-acid polypeptide reads, in one-letter code: DNA-directed RNA polymerase subunit Rpo10 (62 aa).

Residues cysteine 6, cysteine 9, cysteine 43, and cysteine 44 each coordinate Zn(2+).

It belongs to the archaeal Rpo10/eukaryotic RPB10 RNA polymerase subunit family. As to quaternary structure, part of the RNA polymerase complex. Zn(2+) is required as a cofactor.

It is found in the cytoplasm. The catalysed reaction is RNA(n) + a ribonucleoside 5'-triphosphate = RNA(n+1) + diphosphate. In terms of biological role, DNA-dependent RNA polymerase (RNAP) catalyzes the transcription of DNA into RNA using the four ribonucleoside triphosphates as substrates. This is DNA-directed RNA polymerase subunit Rpo10 from Methanococcoides burtonii (strain DSM 6242 / NBRC 107633 / OCM 468 / ACE-M).